We begin with the raw amino-acid sequence, 245 residues long: Probable transcriptional regulatory protein pc1328 (245 aa).

It belongs to the TACO1 family.

It localises to the cytoplasm. The chain is Probable transcriptional regulatory protein pc1328 from Protochlamydia amoebophila (strain UWE25).